The following is a 341-amino-acid chain: Methionine import ATP-binding protein MetN 1 (341 aa).

The region spanning 2–241 is the ABC transporter domain; sequence IEFRQVSKTF…PKTTIAQNFV (240 aa). Residue 38–45 participates in ATP binding; that stretch reads GYSGAGKS.

Belongs to the ABC transporter superfamily. Methionine importer (TC 3.A.1.24) family. In terms of assembly, the complex is composed of two ATP-binding proteins (MetN), two transmembrane proteins (MetI) and a solute-binding protein (MetQ).

It localises to the cell membrane. It carries out the reaction L-methionine(out) + ATP + H2O = L-methionine(in) + ADP + phosphate + H(+). The catalysed reaction is D-methionine(out) + ATP + H2O = D-methionine(in) + ADP + phosphate + H(+). Functionally, part of the ABC transporter complex MetNIQ involved in methionine import. Responsible for energy coupling to the transport system. This chain is Methionine import ATP-binding protein MetN 1, found in Staphylococcus aureus (strain USA300).